Consider the following 147-residue polypeptide: Small ribosomal subunit protein uS12 (147 aa).

Belongs to the universal ribosomal protein uS12 family. As to quaternary structure, part of the 30S ribosomal subunit.

With S4 and S5 plays an important role in translational accuracy. Located at the interface of the 30S and 50S subunits. The sequence is that of Small ribosomal subunit protein uS12 from Methanococcus maripaludis (strain C7 / ATCC BAA-1331).